The primary structure comprises 162 residues: Large ribosomal subunit protein uL22c (162 aa).

It belongs to the universal ribosomal protein uL22 family. Part of the 50S ribosomal subunit.

It localises to the plastid. Its subcellular location is the chloroplast. This protein binds specifically to 23S rRNA. Its function is as follows. The globular domain of the protein is located near the polypeptide exit tunnel on the outside of the subunit, while an extended beta-hairpin is found that lines the wall of the exit tunnel in the center of the 70S ribosome. This Cucumis sativus (Cucumber) protein is Large ribosomal subunit protein uL22c (rpl22).